The primary structure comprises 202 residues: Probable septum site-determining protein MinC (202 aa).

Belongs to the MinC family. Interacts with MinD and FtsZ.

Cell division inhibitor that blocks the formation of polar Z ring septums. Rapidly oscillates between the poles of the cell to destabilize FtsZ filaments that have formed before they mature into polar Z rings. Prevents FtsZ polymerization. This Dictyoglomus turgidum (strain DSM 6724 / Z-1310) protein is Probable septum site-determining protein MinC.